The chain runs to 790 residues: Cadherin-6 (790 aa).

Positions 1–30 (MRTYHCFWLLFWAGQPHQSFLTLLSKRTSG) are cleaved as a signal peptide. A propeptide spanning residues 31–53 (FPEKEKVLVLSGNSRRDLSRSKR) is cleaved from the precursor. Cadherin domains lie at 54-159 (SWMW…EPMF), 160-268 (TKDV…PPRF), 269-383 (PQST…PPVF), 384-486 (SRPA…DNAP), and 487-608 (EFAM…LIHP). Over 54 to 615 (SWMWNQFFLL…IHPTGLSTGA (562 aa)) the chain is Extracellular. N-linked (GlcNAc...) asparagine glycosylation is found at asparagine 165 and asparagine 255. The interval 261 to 289 (VNDNPPRFPQSTYQFRAPESTPPDSPIGR) is disordered. N-linked (GlcNAc...) asparagine glycosylation is found at asparagine 437, asparagine 455, and asparagine 536. Residues 616–636 (LIAILLCIIILLVTVVLFAAL) form a helical membrane-spanning segment. The Cytoplasmic segment spans residues 637–790 (RRQRKKEPLI…YGSMDSDKDS (154 aa)).

It localises to the cell membrane. In terms of biological role, cadherins are calcium-dependent cell adhesion proteins. They preferentially interact with themselves in a homophilic manner in connecting cells; cadherins may thus contribute to the sorting of heterogeneous cell types. This Gallus gallus (Chicken) protein is Cadherin-6 (CDH6).